The primary structure comprises 220 residues: Small ribosomal subunit protein uS3c (220 aa).

One can recognise a KH type-2 domain in the interval 48–119; sequence VQKHTNNPFH…KLCLILIKID (72 aa).

This sequence belongs to the universal ribosomal protein uS3 family. In terms of assembly, part of the 30S ribosomal subunit.

Its subcellular location is the plastid. The protein resides in the chloroplast. This is Small ribosomal subunit protein uS3c (rps3) from Psilotum nudum (Whisk fern).